Reading from the N-terminus, the 949-residue chain is Glutamate receptor ionotropic, kainate 1 (949 aa).

The first 30 residues, 1–30 (MERSTVLIQPGLWTRDTSWTLLYFLCYILP), serve as a signal peptide directing secretion. The Extracellular segment spans residues 31-576 (QTSPQVLRIG…VFSFLNPLSP (546 aa)). N-linked (GlcNAc...) asparagine glycosylation is found at Asn68, Asn74, Asn276, Asn379, Asn428, Asn439, and Asn446. Residues Pro531, Thr533, and Arg538 each contribute to the L-glutamate site. Asn561 carries N-linked (GlcNAc...) asparagine glycosylation. The chain crosses the membrane as a helical span at residues 577-597 (DIWMYVLLACLGVSCVLFVIA). At 598 to 653 (RFTPYEWYNPHPCNPDSDVVENNFTLLNSFWFGVGALMQQGSELMPKALSTRIVGG) the chain is on the cytoplasmic side. The chain crosses the membrane as a helical span at residues 654–674 (IWWFFTLIIISSYTANLAAFL). At 675-834 (TVERMESPID…KEASALGVEN (160 aa)) the chain is on the extracellular side. L-glutamate contacts are provided by Ser704 and Thr705. Ser725 is modified (phosphoserine; by PKC). Glu753 serves as a coordination point for L-glutamate. Thr761 bears the Phosphothreonine; by PKC mark. Cys765 and Cys819 are oxidised to a cystine. The N-linked (GlcNAc...) asparagine glycan is linked to Asn766. Residues 835 to 855 (IGGIFIVLAAGLVLSVFVAIG) form a helical membrane-spanning segment. At 856–949 (EFLYKSRKNN…RRTQRKETVA (94 aa)) the chain is on the cytoplasmic side.

The protein belongs to the glutamate-gated ion channel (TC 1.A.10.1) family. GRIK1 subfamily. As to quaternary structure, homotetramer or heterotetramer of pore-forming glutamate receptor subunits. Tetramers may be formed by the dimerization of dimers. Can form functional heteromeric receptors with GRIK4 and GRIK5. Interacts with KLHL17. As to expression, expressed in the olfactory bulb (at protein level). Expressed in subsets of neurons throughout the developing and adult central and peripheral nervous systems. In the CNS principally in the medial amygdaloid nuclei, medial habenulae, pyriform and cingulate cortices, and Purkinje cell layer. Also highly expressed in embryonic and adult dorsal root ganglia. Expressed at high levels in the trigeminal ganglion neurons.

The protein resides in the cell membrane. It is found in the postsynaptic cell membrane. The catalysed reaction is Ca(2+)(in) = Ca(2+)(out). Its function is as follows. Ionotropic glutamate receptor that functions as a cation-permeable ligand-gated ion channel, gated by L-glutamate and the glutamatergic agonist kainic acid. L-glutamate acts as an excitatory neurotransmitter at many synapses in the central nervous system. Binding of the excitatory neurotransmitter L-glutamate induces a conformation change, leading to the opening of the cation channel, and thereby converts the chemical signal to an electrical impulse. The receptor then desensitizes rapidly and enters a transient inactive state, characterized by the presence of bound agonist. The sequence is that of Glutamate receptor ionotropic, kainate 1 (Grik1) from Rattus norvegicus (Rat).